A 150-amino-acid chain; its full sequence is Interferon antagonist OPG027 (150 aa).

This sequence belongs to the orthopoxvirus OPG027 family.

Its function is as follows. Inhibits antiviral activity induced by type I interferons. Does not block signal transduction of IFN, but is important to counteract the host antiviral state induced by a pre-treatment with IFN. In Homo sapiens (Human), this protein is Interferon antagonist OPG027 (OPG027).